The primary structure comprises 375 residues: Alcohol dehydrogenase 1 (375 aa).

Position 2 is an N-acetylserine (serine 2). The Zn(2+) site is built by cysteine 47, histidine 68, cysteine 98, cysteine 101, cysteine 104, cysteine 112, and cysteine 175. Residues 200–205, aspartate 224, and lysine 229 each bind NAD(+); that span reads WSGRVG. Position 234 is an N6-succinyllysine (lysine 234). 293–295 lines the NAD(+) pocket; it reads VGV. Lysine 340 carries the post-translational modification N6-succinyllysine. Residue arginine 370 coordinates NAD(+).

This sequence belongs to the zinc-containing alcohol dehydrogenase family. Class-I subfamily. As to quaternary structure, homodimer. The cofactor is Zn(2+).

The protein localises to the cytoplasm. The catalysed reaction is a primary alcohol + NAD(+) = an aldehyde + NADH + H(+). It catalyses the reaction a secondary alcohol + NAD(+) = a ketone + NADH + H(+). The sequence is that of Alcohol dehydrogenase 1 (ADH1) from Geomys attwateri (Attwater's pocket gopher).